The sequence spans 103 residues: Small ribosomal subunit protein uS10 (103 aa).

This sequence belongs to the universal ribosomal protein uS10 family. As to quaternary structure, part of the 30S ribosomal subunit.

Involved in the binding of tRNA to the ribosomes. In Escherichia coli O127:H6 (strain E2348/69 / EPEC), this protein is Small ribosomal subunit protein uS10.